We begin with the raw amino-acid sequence, 475 residues long: Ribulose bisphosphate carboxylase large chain (475 aa).

The propeptide occupies 1 to 2; the sequence is MS. Pro-3 is subject to N-acetylproline. Lys-14 bears the N6,N6,N6-trimethyllysine mark. Residues Asn-123 and Thr-173 each coordinate substrate. Residue Lys-175 is the Proton acceptor of the active site. Lys-177 is a substrate binding site. Mg(2+) contacts are provided by Lys-201, Asp-203, and Glu-204. Lys-201 is subject to N6-carboxylysine. His-294 functions as the Proton acceptor in the catalytic mechanism. Residues Arg-295, His-327, and Ser-379 each contribute to the substrate site.

It belongs to the RuBisCO large chain family. Type I subfamily. As to quaternary structure, heterohexadecamer of 8 large chains and 8 small chains; disulfide-linked. The disulfide link is formed within the large subunit homodimers. It depends on Mg(2+) as a cofactor. In terms of processing, the disulfide bond which can form in the large chain dimeric partners within the hexadecamer appears to be associated with oxidative stress and protein turnover.

Its subcellular location is the plastid. It is found in the chloroplast. The enzyme catalyses 2 (2R)-3-phosphoglycerate + 2 H(+) = D-ribulose 1,5-bisphosphate + CO2 + H2O. It catalyses the reaction D-ribulose 1,5-bisphosphate + O2 = 2-phosphoglycolate + (2R)-3-phosphoglycerate + 2 H(+). In terms of biological role, ruBisCO catalyzes two reactions: the carboxylation of D-ribulose 1,5-bisphosphate, the primary event in carbon dioxide fixation, as well as the oxidative fragmentation of the pentose substrate in the photorespiration process. Both reactions occur simultaneously and in competition at the same active site. This Picea sitchensis (Sitka spruce) protein is Ribulose bisphosphate carboxylase large chain.